We begin with the raw amino-acid sequence, 205 residues long: Small ribosomal subunit protein uS4 (205 aa).

Residues 18-46 (NIWGRPKSPVNRREYGPGQHGQRRKGKLS) form a disordered region. One can recognise an S4 RNA-binding domain in the interval 94–157 (RRLDTVVYRA…KQLAFVLEAS (64 aa)).

Belongs to the universal ribosomal protein uS4 family. In terms of assembly, part of the 30S ribosomal subunit. Contacts protein S5. The interaction surface between S4 and S5 is involved in control of translational fidelity.

In terms of biological role, one of the primary rRNA binding proteins, it binds directly to 16S rRNA where it nucleates assembly of the body of the 30S subunit. Functionally, with S5 and S12 plays an important role in translational accuracy. This Rhodopseudomonas palustris (strain HaA2) protein is Small ribosomal subunit protein uS4.